Consider the following 601-residue polypeptide: NADH-quinone oxidoreductase subunit C/D (601 aa).

An NADH dehydrogenase I subunit C region spans residues 1–191; sequence MKLTRDFPSN…DPFMLDAAKQ (191 aa). The tract at residues 215–601 is NADH dehydrogenase I subunit D; that stretch reads DYMFLNLGPN…IDFVMSDVDR (387 aa).

In the N-terminal section; belongs to the complex I 30 kDa subunit family. It in the C-terminal section; belongs to the complex I 49 kDa subunit family. In terms of assembly, NDH-1 is composed of 13 different subunits. Subunits NuoB, CD, E, F, and G constitute the peripheral sector of the complex.

It is found in the cell inner membrane. It carries out the reaction a quinone + NADH + 5 H(+)(in) = a quinol + NAD(+) + 4 H(+)(out). NDH-1 shuttles electrons from NADH, via FMN and iron-sulfur (Fe-S) centers, to quinones in the respiratory chain. The immediate electron acceptor for the enzyme in this species is believed to be ubiquinone. Couples the redox reaction to proton translocation (for every two electrons transferred, four hydrogen ions are translocated across the cytoplasmic membrane), and thus conserves the redox energy in a proton gradient. This Aeromonas salmonicida (strain A449) protein is NADH-quinone oxidoreductase subunit C/D.